The following is a 1009-amino-acid chain: Probable beta-galactosidase B (1009 aa).

The signal sequence occupies residues 1-21 (MAQLFTKIIVYFLLFASPLLA). N-linked (GlcNAc...) asparagine glycosylation is present at Asn-28. Tyr-85 provides a ligand contact to substrate. Asn-95 carries N-linked (GlcNAc...) asparagine glycosylation. Positions 130, 131, 132, and 190 each coordinate substrate. Glu-191 acts as the Proton donor in catalysis. N-linked (GlcNAc...) asparagine glycosylation is present at Asn-247. Tyr-260 lines the substrate pocket. Cys-266 and Cys-319 form a disulfide bridge. Catalysis depends on Glu-303, which acts as the Nucleophile. Tyr-368 lines the substrate pocket. N-linked (GlcNAc...) asparagine glycosylation is found at Asn-375, Asn-406, Asn-427, Asn-451, Asn-682, Asn-740, Asn-771, Asn-784, Asn-826, and Asn-883.

This sequence belongs to the glycosyl hydrolase 35 family.

It is found in the secreted. It carries out the reaction Hydrolysis of terminal non-reducing beta-D-galactose residues in beta-D-galactosides.. Cleaves beta-linked terminal galactosyl residues from gangliosides, glycoproteins, and glycosaminoglycans. The protein is Probable beta-galactosidase B (lacB) of Talaromyces marneffei (strain ATCC 18224 / CBS 334.59 / QM 7333) (Penicillium marneffei).